Here is a 191-residue protein sequence, read N- to C-terminus: Protein YceI (191 aa).

Residues 1 to 22 (MKKNLLGFTLASLLFTTGSAVA) form the signal peptide.

This sequence belongs to the UPF0312 family. Type 1 subfamily.

Its subcellular location is the periplasm. The polypeptide is Protein YceI (Salmonella newport (strain SL254)).